The sequence spans 211 residues: Uracil phosphoribosyltransferase (211 aa).

5-phospho-alpha-D-ribose 1-diphosphate contacts are provided by residues arginine 78, arginine 103, and 130 to 138 (DPMLATGGT). Residues isoleucine 195 and 200 to 202 (GDA) contribute to the uracil site. Aspartate 201 is a binding site for 5-phospho-alpha-D-ribose 1-diphosphate.

This sequence belongs to the UPRTase family. Mg(2+) is required as a cofactor.

The enzyme catalyses UMP + diphosphate = 5-phospho-alpha-D-ribose 1-diphosphate + uracil. The protein operates within pyrimidine metabolism; UMP biosynthesis via salvage pathway; UMP from uracil: step 1/1. With respect to regulation, allosterically activated by GTP. Its function is as follows. Catalyzes the conversion of uracil and 5-phospho-alpha-D-ribose 1-diphosphate (PRPP) to UMP and diphosphate. This is Uracil phosphoribosyltransferase from Streptomyces griseus subsp. griseus (strain JCM 4626 / CBS 651.72 / NBRC 13350 / KCC S-0626 / ISP 5235).